The following is a 211-amino-acid chain: MSAVKPLEAVARDRVGKGAARAVRRQGRVPAVIYGGGQSPQSISLDANQTHHLIYGGGFLTTVFEIEVGGRKIRAIPRDYQLDPVKDLPLHVDFLRVTAGQTVAVEVPVHFVNQDAAPGLKQKSGMLNVVHHTVALEVSPDAIPDAIDVDLTGKDIGDTIHVSDLALPAGASLALDPSETVATLVPPTVLPAAAEEAAVSEAAPAETTKEG.

Belongs to the bacterial ribosomal protein bL25 family. CTC subfamily. Part of the 50S ribosomal subunit; part of the 5S rRNA/L5/L18/L25 subcomplex. Contacts the 5S rRNA. Binds to the 5S rRNA independently of L5 and L18.

Its function is as follows. This is one of the proteins that binds to the 5S RNA in the ribosome where it forms part of the central protuberance. The sequence is that of Large ribosomal subunit protein bL25 from Methylobacterium nodulans (strain LMG 21967 / CNCM I-2342 / ORS 2060).